A 389-amino-acid polypeptide reads, in one-letter code: Chalcone synthase 2 (389 aa).

The active site involves C164.

It belongs to the thiolase-like superfamily. Chalcone/stilbene synthases family.

The enzyme catalyses (E)-4-coumaroyl-CoA + 3 malonyl-CoA + 3 H(+) = 2',4,4',6'-tetrahydroxychalcone + 3 CO2 + 4 CoA. It participates in secondary metabolite biosynthesis; flavonoid biosynthesis. The primary product of this enzyme is 4,2',4',6'-tetrahydroxychalcone (also termed naringenin-chalcone or chalcone) which can under specific conditions spontaneously isomerize into naringenin. The protein is Chalcone synthase 2 (CHS2) of Trifolium subterraneum (Subterranean clover).